The sequence spans 179 residues: Large ribosomal subunit protein uL5 (179 aa).

Belongs to the universal ribosomal protein uL5 family. Part of the 50S ribosomal subunit; part of the 5S rRNA/L5/L18/L25 subcomplex. Contacts the 5S rRNA and the P site tRNA. Forms a bridge to the 30S subunit in the 70S ribosome.

Functionally, this is one of the proteins that bind and probably mediate the attachment of the 5S RNA into the large ribosomal subunit, where it forms part of the central protuberance. In the 70S ribosome it contacts protein S13 of the 30S subunit (bridge B1b), connecting the 2 subunits; this bridge is implicated in subunit movement. Contacts the P site tRNA; the 5S rRNA and some of its associated proteins might help stabilize positioning of ribosome-bound tRNAs. This Buchnera aphidicola subsp. Acyrthosiphon pisum (strain APS) (Acyrthosiphon pisum symbiotic bacterium) protein is Large ribosomal subunit protein uL5.